We begin with the raw amino-acid sequence, 276 residues long: MYNVKSGKLLPFGVIEGVTRTNVQQKHHFDTLKVDWIAEEVPVALVYNGISHVVMMASPKDLEYFAIGFSLSEGIIESQHEIRSIDIVAHCRGGIELQIELSSRRFAGLKERRRNLAGRTGCGICGAEQLSDIFRPISPLPFTQTFSLNQLDYALSQLTSVQDVGALTGCTHAAGWINPEGKLLGGCEDVGRHVALDKMLGMKAKTGWQQGAVLVSSRASYEMVQKSAICGVEILLAVSAATSLAVEIADRCHLTLVGFCKPGKATIYTHAERLIS.

Catalysis depends on C122, which acts as the Cysteine persulfide intermediate. 259-264 is a Mo-bis(molybdopterin guanine dinucleotide) binding site; the sequence is FCKPGK.

This sequence belongs to the FdhD family.

The protein resides in the cytoplasm. In terms of biological role, required for formate dehydrogenase (FDH) activity. Acts as a sulfur carrier protein that transfers sulfur from IscS to the molybdenum cofactor prior to its insertion into FDH. This Photorhabdus laumondii subsp. laumondii (strain DSM 15139 / CIP 105565 / TT01) (Photorhabdus luminescens subsp. laumondii) protein is Sulfur carrier protein FdhD.